A 333-amino-acid chain; its full sequence is Lipoyl synthase (333 aa).

Residues 1–15 (MSTLVESPVPSNDSQ) show a composition bias toward polar residues. The interval 1–34 (MSTLVESPVPSNDSQAAAPAAYDPTQKQKSQAKT) is disordered. Positions 80, 85, 91, 106, 110, 113, and 320 each coordinate [4Fe-4S] cluster. The 219-residue stretch at 91 to 309 (CFGKGTATFM…EREAYAMGFT (219 aa)) folds into the Radical SAM core domain.

It belongs to the radical SAM superfamily. Lipoyl synthase family. Requires [4Fe-4S] cluster as cofactor.

Its subcellular location is the cytoplasm. The enzyme catalyses [[Fe-S] cluster scaffold protein carrying a second [4Fe-4S](2+) cluster] + N(6)-octanoyl-L-lysyl-[protein] + 2 oxidized [2Fe-2S]-[ferredoxin] + 2 S-adenosyl-L-methionine + 4 H(+) = [[Fe-S] cluster scaffold protein] + N(6)-[(R)-dihydrolipoyl]-L-lysyl-[protein] + 4 Fe(3+) + 2 hydrogen sulfide + 2 5'-deoxyadenosine + 2 L-methionine + 2 reduced [2Fe-2S]-[ferredoxin]. The protein operates within protein modification; protein lipoylation via endogenous pathway; protein N(6)-(lipoyl)lysine from octanoyl-[acyl-carrier-protein]: step 2/2. In terms of biological role, catalyzes the radical-mediated insertion of two sulfur atoms into the C-6 and C-8 positions of the octanoyl moiety bound to the lipoyl domains of lipoate-dependent enzymes, thereby converting the octanoylated domains into lipoylated derivatives. The polypeptide is Lipoyl synthase (Bordetella parapertussis (strain 12822 / ATCC BAA-587 / NCTC 13253)).